The chain runs to 162 residues: D-beta-D-heptose 1-phosphate adenylyltransferase (162 aa).

The enzyme catalyses D-glycero-beta-D-manno-heptose 1-phosphate + ATP + H(+) = ADP-D-glycero-beta-D-manno-heptose + diphosphate. Its pathway is nucleotide-sugar biosynthesis; ADP-L-glycero-beta-D-manno-heptose biosynthesis; ADP-L-glycero-beta-D-manno-heptose from D-glycero-beta-D-manno-heptose 7-phosphate: step 3/4. It participates in bacterial outer membrane biogenesis; LPS core biosynthesis. Functionally, catalyzes the ADP transfer from ATP to D-glycero-beta-D-manno-heptose 1-phosphate, yielding ADP-D-glycero-beta-D-manno-heptose. Cannot use GTP, UTP, or CTP as substrate. Is not active against the alpha-anomer substrate. Is also able to catalyze the ADP transfer to beta-glucose 1-phosphate in vitro, yielding ADP-beta-glucose. This Bordetella bronchiseptica (strain ATCC BAA-588 / NCTC 13252 / RB50) (Alcaligenes bronchisepticus) protein is D-beta-D-heptose 1-phosphate adenylyltransferase.